Here is a 647-residue protein sequence, read N- to C-terminus: Putative lipase atg15 (647 aa).

Topologically, residues 1–18 are cytoplasmic; it reads MLPSGKRKADAFSCTSAA. A helical; Signal-anchor for type II membrane protein membrane pass occupies residues 19 to 39; that stretch reads RVTAKLALSFLALSTTPLVNA. Over 40–647 the chain is Lumenal; it reads FSYEEPNAQI…EGGEGPVNDL (608 aa). Residues Asn203, Asn225, Asn283, and Asn307 are each glycosylated (N-linked (GlcNAc...) asparagine). Ser323 serves as the catalytic Charge relay system. N-linked (GlcNAc...) asparagine glycosylation occurs at Asn469. Residues 597–626 form a disordered region; it reads APALPSSVLTPSATATPPEGQPDDSGKRCR.

This sequence belongs to the AB hydrolase superfamily. Lipase family. As to quaternary structure, binds to both phosphatidylinositol (PI) and phosphatidylinositol 3,5-bisphosphate (PIP2).

The protein localises to the endosome. It localises to the multivesicular body membrane. The protein resides in the prevacuolar compartment membrane. It carries out the reaction a triacylglycerol + H2O = a diacylglycerol + a fatty acid + H(+). Lipase which is essential for lysis of subvacuolar cytoplasm to vacuole targeted bodies and intravacuolar autophagic bodies. Involved in the lysis of intravacuolar multivesicular body (MVB) vesicles. The intravacuolar membrane disintegration by atg15 is critical to life span extension. The polypeptide is Putative lipase atg15 (atg15) (Neurospora crassa (strain ATCC 24698 / 74-OR23-1A / CBS 708.71 / DSM 1257 / FGSC 987)).